The following is a 300-amino-acid chain: Glucose and ribitol dehydrogenase homolog (300 aa).

The segment covering 1–14 (MASQQFPPQNQETQ) has biased composition (polar residues). A disordered region spans residues 1–23 (MASQQFPPQNQETQPGKEHAMDP). 44 to 68 (IVTGGDSGIGRAVCLCFALEGATVA) serves as a coordination point for NAD(+). A substrate-binding site is contributed by Ser-192. The active-site Proton acceptor is the Tyr-205.

The protein belongs to the short-chain dehydrogenases/reductases (SDR) family.

In terms of biological role, may act as a short alcohol-polyol-sugar dehydrogenase possibly related to carbohydrate metabolism and the acquisition of desiccation tolerance. May also be involved in signal transduction. This is Glucose and ribitol dehydrogenase homolog from Oryza sativa subsp. japonica (Rice).